The primary structure comprises 208 residues: MVLSGKDLTAYRNEDVLFQGLSFCLFPQQLMTITGPNGIGKSTLLRIIAGLFKAAEGHVSLKDQEQIYPVATACHYLGPQNAMKPFLSVIDNLQFWSAFYGQPLHSPHEVLADIGLSDLEHVPFNVLSTGQKRRIAIARLLLSYRPVWILDEPISGIDSYAQTLLTNIFQYHLNQGGMIIAATHSPLGIPENHKITLEKFLPPQEKIQ.

The 204-residue stretch at 3–206 (LSGKDLTAYR…LEKFLPPQEK (204 aa)) folds into the ABC transporter domain. ATP is bound at residue 35 to 42 (GPNGIGKS).

Belongs to the ABC transporter superfamily. CcmA exporter (TC 3.A.1.107) family. The complex is composed of two ATP-binding proteins (CcmA) and two transmembrane proteins (CcmB).

Its subcellular location is the cell inner membrane. It catalyses the reaction heme b(in) + ATP + H2O = heme b(out) + ADP + phosphate + H(+). Its function is as follows. Part of the ABC transporter complex CcmAB involved in the biogenesis of c-type cytochromes; once thought to export heme, this seems not to be the case, but its exact role is uncertain. Responsible for energy coupling to the transport system. In Bartonella henselae (strain ATCC 49882 / DSM 28221 / CCUG 30454 / Houston 1) (Rochalimaea henselae), this protein is Cytochrome c biogenesis ATP-binding export protein CcmA.